The following is a 493-amino-acid chain: Galactose-1-phosphate uridylyltransferase (493 aa).

It belongs to the galactose-1-phosphate uridylyltransferase type 2 family.

The protein localises to the cytoplasm. It catalyses the reaction alpha-D-galactose 1-phosphate + UDP-alpha-D-glucose = alpha-D-glucose 1-phosphate + UDP-alpha-D-galactose. It functions in the pathway carbohydrate metabolism; galactose metabolism. The protein is Galactose-1-phosphate uridylyltransferase of Lactococcus lactis subsp. cremoris (strain SK11).